The sequence spans 454 residues: uncharacterized protein (454 aa).

[4Fe-4S] cluster-binding residues include Cys73, Cys79, Cys82, and Cys154. Residues Gln279, Phe307, Asp328, and Asp381 each coordinate S-adenosyl-L-methionine. The active-site Nucleophile is the Cys408.

Belongs to the class I-like SAM-binding methyltransferase superfamily. RNA M5U methyltransferase family.

This is an uncharacterized protein from Leptospira interrogans serogroup Icterohaemorrhagiae serovar Lai (strain 56601).